A 439-amino-acid polypeptide reads, in one-letter code: Branched-chain amino acid permease BrnQ (439 aa).

Topologically, residues methionine 1–aspartate 9 are cytoplasmic. A helical transmembrane segment spans residues isoleucine 10–proline 30. Residues proline 31–alanine 45 lie on the Periplasmic side of the membrane. The chain crosses the membrane as a helical span at residues phenylalanine 46 to valine 66. Residues glycine 67–lysine 79 lie on the Cytoplasmic side of the membrane. The chain crosses the membrane as a helical span at residues valine 80–proline 100. Residues arginine 101–serine 118 lie on the Periplasmic side of the membrane. A helical transmembrane segment spans residues alanine 119 to tyrosine 139. Topologically, residues proline 140 to asparagine 149 are cytoplasmic. Residues phenylalanine 150–proline 170 form a helical membrane-spanning segment. The Periplasmic segment spans residues alanine 171–glycine 189. The chain crosses the membrane as a helical span at residues phenylalanine 190 to valine 210. Over asparagine 211–arginine 226 the chain is Cytoplasmic. Residues tyrosine 227 to phenylalanine 247 form a helical membrane-spanning segment. The Periplasmic portion of the chain corresponds to arginine 248–glycine 277. A helical transmembrane segment spans residues glycine 278–leucine 298. Residues threonine 299–threonine 316 lie on the Cytoplasmic side of the membrane. The helical transmembrane segment at leucine 317–isoleucine 337 threads the bilayer. A topological domain (periplasmic) is located at residue glutamine 338. The chain crosses the membrane as a helical span at residues isoleucine 339 to phenylalanine 359. The Cytoplasmic segment spans residues threonine 360–arginine 369. A helical membrane pass occupies residues valine 370 to serine 390. Residues alanine 391–proline 404 lie on the Periplasmic side of the membrane. Residues leucine 405–isoleucine 425 traverse the membrane as a helical segment. Topologically, residues tryptophan 426 to histidine 439 are cytoplasmic.

Belongs to the branched chain amino acid transporter family.

The protein resides in the cell inner membrane. Liv-II branched chain amino acid transport system, which transports leucine, valine and isoleucine. The protein is Branched-chain amino acid permease BrnQ (brnQ) of Escherichia coli O157:H7.